The following is a 305-amino-acid chain: Glycine--tRNA ligase alpha subunit (305 aa).

This sequence belongs to the class-II aminoacyl-tRNA synthetase family. In terms of assembly, tetramer of two alpha and two beta subunits.

It localises to the cytoplasm. It catalyses the reaction tRNA(Gly) + glycine + ATP = glycyl-tRNA(Gly) + AMP + diphosphate. In Streptococcus pneumoniae (strain 70585), this protein is Glycine--tRNA ligase alpha subunit.